Consider the following 351-residue polypeptide: Small ribosomal subunit biogenesis GTPase RsgA 1 (351 aa).

The CP-type G domain maps to 100-258; it reads LRTDAQIVAS…IIDTPGMREL (159 aa). Residues 148–151 and 200–208 contribute to the GTP site; these read SKVD and GSSGAGKST. C282, C287, H289, and C295 together coordinate Zn(2+).

The protein belongs to the TRAFAC class YlqF/YawG GTPase family. RsgA subfamily. As to quaternary structure, monomer. Associates with 30S ribosomal subunit, binds 16S rRNA. The cofactor is Zn(2+).

Its subcellular location is the cytoplasm. In terms of biological role, one of several proteins that assist in the late maturation steps of the functional core of the 30S ribosomal subunit. Helps release RbfA from mature subunits. May play a role in the assembly of ribosomal proteins into the subunit. Circularly permuted GTPase that catalyzes slow GTP hydrolysis, GTPase activity is stimulated by the 30S ribosomal subunit. This Oceanobacillus iheyensis (strain DSM 14371 / CIP 107618 / JCM 11309 / KCTC 3954 / HTE831) protein is Small ribosomal subunit biogenesis GTPase RsgA 1.